The following is a 103-amino-acid chain: Large ribosomal subunit protein uL24 (103 aa).

Belongs to the universal ribosomal protein uL24 family. In terms of assembly, part of the 50S ribosomal subunit.

In terms of biological role, one of two assembly initiator proteins, it binds directly to the 5'-end of the 23S rRNA, where it nucleates assembly of the 50S subunit. One of the proteins that surrounds the polypeptide exit tunnel on the outside of the subunit. The chain is Large ribosomal subunit protein uL24 from Agathobacter rectalis (strain ATCC 33656 / DSM 3377 / JCM 17463 / KCTC 5835 / VPI 0990) (Eubacterium rectale).